The following is a 383-amino-acid chain: Deoxyguanosinetriphosphate triphosphohydrolase-like protein (383 aa).

The HD domain occupies 62–198; it reads RLTHSLEVST…AALADDISYI (137 aa).

It belongs to the dGTPase family. Type 2 subfamily.

The protein is Deoxyguanosinetriphosphate triphosphohydrolase-like protein of Rickettsia bellii (strain RML369-C).